The primary structure comprises 173 residues: Mediator of RNA polymerase II transcription subunit 10 (173 aa).

Residues M1–R20 show a composition bias toward polar residues. The interval M1 to D45 is disordered. The span at S21–D45 shows a compositional bias: basic and acidic residues.

The protein belongs to the Mediator complex subunit 10 family. In terms of assembly, component of the Mediator complex.

It is found in the nucleus. Its function is as follows. Component of the Mediator complex, a coactivator involved in the regulated transcription of nearly all RNA polymerase II-dependent genes. Mediator functions as a bridge to convey information from gene-specific regulatory proteins to the basal RNA polymerase II transcription machinery. Mediator is recruited to promoters by direct interactions with regulatory proteins and serves as a scaffold for the assembly of a functional preinitiation complex with RNA polymerase II and the general transcription factors. This is Mediator of RNA polymerase II transcription subunit 10 (mdt-10) from Caenorhabditis briggsae.